Consider the following 125-residue polypeptide: Small ribosomal subunit protein uS13 (125 aa).

The tract at residues 95–125 is disordered; sequence GLPVNGQRTRTNARTRKGGKKTVANKKKVTK. Over residues 105 to 125 the composition is skewed to basic residues; that stretch reads TNARTRKGGKKTVANKKKVTK.

It belongs to the universal ribosomal protein uS13 family. As to quaternary structure, part of the 30S ribosomal subunit. Forms a loose heterodimer with protein S19. Forms two bridges to the 50S subunit in the 70S ribosome.

Located at the top of the head of the 30S subunit, it contacts several helices of the 16S rRNA. In the 70S ribosome it contacts the 23S rRNA (bridge B1a) and protein L5 of the 50S subunit (bridge B1b), connecting the 2 subunits; these bridges are implicated in subunit movement. Contacts the tRNAs in the A and P-sites. This chain is Small ribosomal subunit protein uS13, found in Leptospira interrogans serogroup Icterohaemorrhagiae serovar copenhageni (strain Fiocruz L1-130).